The primary structure comprises 375 residues: Alcohol dehydrogenase 1 (375 aa).

The residue at position 1 (alanine 1) is an N-acetylalanine. Zn(2+) contacts are provided by cysteine 46, histidine 68, cysteine 98, cysteine 101, cysteine 104, cysteine 112, and cysteine 175. NAD(+)-binding positions include 200-205 (GLGGVG), aspartate 224, lysine 229, 293-295 (VGL), and arginine 370.

The protein belongs to the zinc-containing alcohol dehydrogenase family. Class-I subfamily. Zn(2+) serves as cofactor.

The protein localises to the cytoplasm. The catalysed reaction is a primary alcohol + NAD(+) = an aldehyde + NADH + H(+). The enzyme catalyses a secondary alcohol + NAD(+) = a ketone + NADH + H(+). This is Alcohol dehydrogenase 1 from Pelophylax perezi (Perez's frog).